The sequence spans 485 residues: Cysteine--tRNA ligase (485 aa).

C27 serves as a coordination point for Zn(2+). The 'HIGH' region motif lies at 29 to 39; sequence ITAYDLCHIGH. C208, H233, and E237 together coordinate Zn(2+). The short motif at 265–269 is the 'KMSKS' region element; it reads KMSKS. K268 serves as a coordination point for ATP.

The protein belongs to the class-I aminoacyl-tRNA synthetase family. As to quaternary structure, monomer. Zn(2+) is required as a cofactor.

Its subcellular location is the cytoplasm. The enzyme catalyses tRNA(Cys) + L-cysteine + ATP = L-cysteinyl-tRNA(Cys) + AMP + diphosphate. This Maridesulfovibrio salexigens (strain ATCC 14822 / DSM 2638 / NCIMB 8403 / VKM B-1763) (Desulfovibrio salexigens) protein is Cysteine--tRNA ligase.